The primary structure comprises 169 residues: N-alpha-acetyltransferase 50 (169 aa).

The region spanning 6-155 is the N-acetyltransferase domain; that stretch reads IELGDVTPHN…DAHVLQKNLK (150 aa). Thr-12 carries the post-translational modification Phosphothreonine. Substrate is bound at residue Tyr-31. Lys-34 and Lys-37 each carry N6-acetyllysine. Tyr-73 is a catalytic residue. Met-75 provides a ligand contact to substrate. Position 77-90 (77-90) interacts with acetyl-CoA; the sequence is LGCLAPYRRLGIGT. Tyr-110 carries the post-translational modification Phosphotyrosine. His-112 is a catalytic residue. 117–126 contributes to the CoA binding site; that stretch reads NESAIDFYRK. Residues 138-141 are substrate; that stretch reads YYKR. An N6-acetyllysine modification is found at Lys-140.

This sequence belongs to the acetyltransferase family. GNAT subfamily. Component of the N-terminal acetyltransferase E (NatE) complex at least composed of NAA10, NAA15 and NAA50. Interacts with NAA10. Interacts with NAA15. Predominantly interacts with NAA15 in the N-terminal acetyltransferase A complex (NatA complex); the interactions reduce the acetylation activity of the NatA complex. Component of the N-terminal acetyltransferase E (NatE)/HYPK complex at least composed of NAA10, NAA15, NAA50 and HYPK. Within the complex interacts with NAA15. Its capacity to interact with the NatA complex is reduced by HYPK. Interacts with NAA35.

It is found in the cytoplasm. Its subcellular location is the nucleus. It carries out the reaction N-terminal L-methionyl-L-alanyl-[protein] + acetyl-CoA = N-terminal N(alpha)-acetyl-L-methionyl-L-alanyl-[protein] + CoA + H(+). The enzyme catalyses N-terminal L-methionyl-L-seryl-[protein] + acetyl-CoA = N-terminal N(alpha)-acetyl-L-methionyl-L-seryl-[protein] + CoA + H(+). It catalyses the reaction N-terminal L-methionyl-L-valyl-[protein] + acetyl-CoA = N-terminal N(alpha)-acetyl-L-methionyl-L-valyl-[protein] + CoA + H(+). The catalysed reaction is N-terminal L-methionyl-L-threonyl-[protein] + acetyl-CoA = N-terminal N(alpha)-acetyl-L-methionyl-L-threonyl-[protein] + CoA + H(+). It carries out the reaction N-terminal L-methionyl-L-lysyl-[protein] + acetyl-CoA = N-terminal N(alpha)-acetyl-L-methionyl-L-lysyl-[protein] + CoA + H(+). The enzyme catalyses N-terminal L-methionyl-L-leucyl-[protein] + acetyl-CoA = N-terminal N(alpha)-acetyl-L-methionyl-L-leucyl-[protein] + CoA + H(+). It catalyses the reaction N-terminal L-methionyl-L-phenylalanyl-[protein] + acetyl-CoA = N-terminal N(alpha)-acetyl-L-methionyl-L-phenylalanyl-[protein] + CoA + H(+). The catalysed reaction is N-terminal L-methionyl-L-tyrosyl-[protein] + acetyl-CoA = N-terminal N(alpha)-acetyl-L-methionyl-L-tyrosyl-[protein] + CoA + H(+). Functionally, N-alpha-acetyltransferase that acetylates the N-terminus of proteins that retain their initiating methionine. Has a broad substrate specificity: able to acetylate the initiator methionine of most peptides, except for those with a proline in second position. Also displays N-epsilon-acetyltransferase activity by mediating acetylation of the side chain of specific lysines on proteins. Autoacetylates in vivo. The relevance of N-epsilon-acetyltransferase activity is however unclear: able to acetylate H4 in vitro, but this result has not been confirmed in vivo. Component of N-alpha-acetyltransferase complexes containing NAA10 and NAA15, which has N-alpha-acetyltransferase activity. Does not influence the acetyltransferase activity of NAA10. However, it negatively regulates the N-alpha-acetyltransferase activity of the N-terminal acetyltransferase A complex (also called the NatA complex). The multiprotein complexes probably constitute the major contributor for N-terminal acetylation at the ribosome exit tunnel, with NAA10 acetylating all amino termini that are devoid of methionine and NAA50 acetylating other peptides. Required for sister chromatid cohesion during mitosis by promoting binding of CDCA5/sororin to cohesin: may act by counteracting the function of NAA10. The protein is N-alpha-acetyltransferase 50 of Mus musculus (Mouse).